The primary structure comprises 150 residues: Large ribosomal subunit protein bL9 (150 aa).

The protein belongs to the bacterial ribosomal protein bL9 family.

Binds to the 23S rRNA. The sequence is that of Large ribosomal subunit protein bL9 from Limosilactobacillus reuteri (strain DSM 20016) (Lactobacillus reuteri).